The sequence spans 421 residues: UDP-glucuronic acid decarboxylase 1 (421 aa).

The Cytoplasmic segment spans residues 1 to 19 (MVRTRIQRLLTGINRRMMK). The chain crosses the membrane as a helical span at residues 20 to 40 (LLIALALIAYVASVWGNFVNM). The Lumenal portion of the chain corresponds to 41–421 (SKSIQENGEQ…RVKKGRTRHN (381 aa)). 10 residues coordinate NAD(+): G99, F100, V101, D120, N121, F123, T124, G125, D145, and V146. UDP-alpha-D-glucuronate-binding residues include L150 and Y151. NAD(+) contacts are provided by L160 and S162. K178 is a binding site for UDP-alpha-D-glucuronate. NAD(+) is bound at residue T179. Residues N186, G189, K192, and R193 each coordinate UDP-alpha-D-glucuronate. Residues A201, Y232, and K236 each contribute to the NAD(+) site. Y232 serves as the catalytic Proton acceptor. UDP-alpha-D-glucuronate contacts are provided by Y246, Q249, and E250. Residues T262, H268, and R273 each contribute to the NAD(+) site. N-linked (GlcNAc...) asparagine glycans are attached at residues N317 and N386. The tract at residues 400–421 (ANNQYIPKPKPARVKKGRTRHN) is disordered. The span at 409-421 (KPARVKKGRTRHN) shows a compositional bias: basic residues.

The protein belongs to the NAD(P)-dependent epimerase/dehydratase family. UDP-glucuronic acid decarboxylase subfamily. As to quaternary structure, homodimer and homotetramer. NAD(+) is required as a cofactor.

The protein localises to the golgi apparatus. It localises to the golgi stack membrane. It carries out the reaction UDP-alpha-D-glucuronate + H(+) = UDP-alpha-D-xylose + CO2. The protein operates within nucleotide-sugar biosynthesis; UDP-alpha-D-xylose biosynthesis; UDP-alpha-D-xylose from UDP-alpha-D-glucuronate: step 1/1. Catalyzes the NAD-dependent decarboxylation of UDP-glucuronic acid to UDP-xylose. Necessary for the biosynthesis of the core tetrasaccharide in glycosaminoglycan biosynthesis. The protein is UDP-glucuronic acid decarboxylase 1 (uxs1) of Xenopus tropicalis (Western clawed frog).